The following is a 202-amino-acid chain: dITP/XTP pyrophosphatase (202 aa).

Ser-7–Lys-12 lines the substrate pocket. Asp-68 (proton acceptor) is an active-site residue. Asp-68 is a binding site for Mg(2+). Residues Ser-69, Phe-156–Asp-159, Lys-179, and His-184–Arg-185 contribute to the substrate site.

This sequence belongs to the HAM1 NTPase family. In terms of assembly, homodimer. It depends on Mg(2+) as a cofactor.

The catalysed reaction is XTP + H2O = XMP + diphosphate + H(+). It catalyses the reaction dITP + H2O = dIMP + diphosphate + H(+). The enzyme catalyses ITP + H2O = IMP + diphosphate + H(+). Pyrophosphatase that catalyzes the hydrolysis of nucleoside triphosphates to their monophosphate derivatives, with a high preference for the non-canonical purine nucleotides XTP (xanthosine triphosphate), dITP (deoxyinosine triphosphate) and ITP. Seems to function as a house-cleaning enzyme that removes non-canonical purine nucleotides from the nucleotide pool, thus preventing their incorporation into DNA/RNA and avoiding chromosomal lesions. The polypeptide is dITP/XTP pyrophosphatase (Frankia alni (strain DSM 45986 / CECT 9034 / ACN14a)).